A 145-amino-acid chain; its full sequence is Transcription antitermination protein NusB (145 aa).

The protein belongs to the NusB family.

Functionally, involved in transcription antitermination. Required for transcription of ribosomal RNA (rRNA) genes. Binds specifically to the boxA antiterminator sequence of the ribosomal RNA (rrn) operons. The protein is Transcription antitermination protein NusB of Acetivibrio thermocellus (strain ATCC 27405 / DSM 1237 / JCM 9322 / NBRC 103400 / NCIMB 10682 / NRRL B-4536 / VPI 7372) (Clostridium thermocellum).